Here is a 70-residue protein sequence, read N- to C-terminus: Turripeptide OL179 (70 aa).

The N-terminal stretch at 1-21 (MMAKQVVVLLALLLLLPIVTA) is a signal peptide. A propeptide spanning residues 22–32 (SMGDASGRTGR) is cleaved from the precursor.

As to expression, expressed by the venom duct.

It is found in the secreted. Its function is as follows. Acts as a neurotoxin by inhibiting an ion channel. The polypeptide is Turripeptide OL179 (Iotyrris olangoensis (Sea snail)).